Consider the following 65-residue polypeptide: Small hydrophobic protein (65 aa).

Residues 1–20 (MGNTSITIEFTSKFWPYFTL) lie on the Intravirion side of the membrane. The interaction with host BCAP31 stretch occupies residues 6 to 15 (ITIEFTSKFW). The helical; Signal-anchor for type II membrane protein transmembrane segment at 21-44 (IHMILTPISLLIIITIMIAILNKL) threads the bilayer. The segment at 38-43 (IAILNK) is interaction with small-molecule inhibitor. The Virion surface portion of the chain corresponds to 45–65 (SEHKTFCNKTLELGQMYQINT). A glycan (N-linked (GlcNAc...) asparagine; by host) is linked at Asn-52.

The protein belongs to the orthopneumovirus small hydrophobic protein family. In terms of assembly, homopentamer forming a funnel-like pore. Interacts with glycoprotein G; this interaction occurs on the surface of virion particles and infected cells. Interacts with host BCAP31 (via C-terminus); this interaction is direct. Four species of SH have been detected in infected cell cytoplasm: a 7.5 kDa non-glycosylated form (SH0), a 13-15 kDa form that contains one or two N-linked carbohydrate side chains of the high-mannose type (SHg), a 21-30 kDa polylactosaminoglycan-modified form of the protein (SHp), and the isoform generated by alternative translational initiation. Of these different forms, SH0 is by far the most abundant protein detected during virus infection. In terms of processing, tyrosine phosphorylated.

Its subcellular location is the virion membrane. It localises to the host cell membrane. It is found in the host Golgi apparatus membrane. The protein resides in the host endoplasmic reticulum membrane. With respect to regulation, channel activity is inhibited by copper. Also inhibited by small-molecule pyronin B. In terms of biological role, viroporin that forms a homopentameric ion channel displaying low ion selectivity. May play a role in virus morphogenesis and pathogenicity at various stages of the viral life cycle. Accumulates at the membrane of the Golgi apparatus in infected cells and may facilitate virus release by modifying the secretory pathway. May enhance host membrane permeability and disrupt cellular ion homeostasis, which can be sensed as damage-associated molecular patterns/danger signals, triggering NLRP3 inflammasome activation and inflammatory immune response. Also inhibits host TNFA-mediated signaling pathway and may delay apoptosis, allowing time for the virus to replicate. The sequence is that of Small hydrophobic protein from Human respiratory syncytial virus B (strain 18537).